The primary structure comprises 517 residues: Crotonobetaine/carnitine--CoA ligase (517 aa).

It belongs to the ATP-dependent AMP-binding enzyme family.

The enzyme catalyses 4-(trimethylamino)butanoate + ATP + CoA = 4-(trimethylamino)butanoyl-CoA + AMP + diphosphate. It carries out the reaction crotonobetaine + ATP + CoA = crotonobetainyl-CoA + AMP + diphosphate. The catalysed reaction is (R)-carnitine + ATP + CoA = (R)-carnitinyl-CoA + AMP + diphosphate. Its pathway is amine and polyamine metabolism; carnitine metabolism. In terms of biological role, catalyzes the transfer of CoA to carnitine, generating the initial carnitinyl-CoA needed for the CaiB reaction cycle. Also has activity toward crotonobetaine and gamma-butyrobetaine. This is Crotonobetaine/carnitine--CoA ligase from Escherichia coli O157:H7.